Reading from the N-terminus, the 296-residue chain is 4-hydroxy-tetrahydrodipicolinate synthase (296 aa).

Threonine 44 lines the pyruvate pocket. Residue tyrosine 132 is the Proton donor/acceptor of the active site. The active-site Schiff-base intermediate with substrate is the lysine 162. Isoleucine 204 contacts pyruvate.

It belongs to the DapA family. Homotetramer; dimer of dimers.

It is found in the cytoplasm. It catalyses the reaction L-aspartate 4-semialdehyde + pyruvate = (2S,4S)-4-hydroxy-2,3,4,5-tetrahydrodipicolinate + H2O + H(+). It participates in amino-acid biosynthesis; L-lysine biosynthesis via DAP pathway; (S)-tetrahydrodipicolinate from L-aspartate: step 3/4. In terms of biological role, catalyzes the condensation of (S)-aspartate-beta-semialdehyde [(S)-ASA] and pyruvate to 4-hydroxy-tetrahydrodipicolinate (HTPA). The polypeptide is 4-hydroxy-tetrahydrodipicolinate synthase (Novosphingobium aromaticivorans (strain ATCC 700278 / DSM 12444 / CCUG 56034 / CIP 105152 / NBRC 16084 / F199)).